Here is a 101-residue protein sequence, read N- to C-terminus: uncharacterized protein (101 aa).

This is an uncharacterized protein from Haemophilus influenzae (strain ATCC 51907 / DSM 11121 / KW20 / Rd).